A 157-amino-acid polypeptide reads, in one-letter code: Transcriptional repressor NrdR (157 aa).

Residues 3–34 (CPKCNSTHSRVVDSRHADEANAIRRRRECENC) fold into a zinc finger. The ATP-cone domain occupies 49-139 (LIVVKKDGTR…VYKEFKDVDQ (91 aa)).

It belongs to the NrdR family. Zn(2+) is required as a cofactor.

Its function is as follows. Negatively regulates transcription of bacterial ribonucleotide reductase nrd genes and operons by binding to NrdR-boxes. This is Transcriptional repressor NrdR from Staphylococcus carnosus (strain TM300).